The primary structure comprises 116 residues: NADPH-dependent 7-cyano-7-deazaguanine reductase (116 aa).

Cysteine 31 acts as the Thioimide intermediate in catalysis. The active-site Proton donor is the aspartate 38. Substrate is bound by residues 53–55 (VEL) and 72–73 (YE).

This sequence belongs to the GTP cyclohydrolase I family. QueF type 1 subfamily.

The protein resides in the cytoplasm. It catalyses the reaction 7-aminomethyl-7-carbaguanine + 2 NADP(+) = 7-cyano-7-deazaguanine + 2 NADPH + 3 H(+). The protein operates within tRNA modification; tRNA-queuosine biosynthesis. Functionally, catalyzes the NADPH-dependent reduction of 7-cyano-7-deazaguanine (preQ0) to 7-aminomethyl-7-deazaguanine (preQ1). This chain is NADPH-dependent 7-cyano-7-deazaguanine reductase, found in Chloroherpeton thalassium (strain ATCC 35110 / GB-78).